A 474-amino-acid chain; its full sequence is Membrane-bound acylglycerophosphatidylinositol O-acyltransferase mboat7 (474 aa).

The Cytoplasmic segment spans residues 1–5 (MSPNE). A helical membrane pass occupies residues 6–22 (LTYLAILLGSAPLGFLF). Topologically, residues 23 to 33 (KNGSPQVKQRG) are lumenal. A helical membrane pass occupies residues 34-57 (SAAVGVALTLITCHIHSLHSAITI). Residues 58–73 (LGTWLIIKILPRSCHF) are Cytoplasmic-facing. The chain crosses the membrane as a helical span at residues 74–93 (PTLGWTFTYLLFFRTITYFD). Residues 94-193 (IPAPTPFTNA…IPSWKPLVSR (100 aa)) lie on the Lumenal side of the membrane. Residues 194–211 (LKPAPVFGVLFLIASQYF) form a helical membrane-spanning segment. At 212 to 230 (PLDYVKTDEFYEQAFLYRL) the chain is on the cytoplasmic side. A helical transmembrane segment spans residues 231–260 (FYMVPTFFIFRMRFYVAWIFAECGCISAAF). The Lumenal segment spans residues 261–427 (GAYPVSAKSR…LTFTDTYRYW (167 aa)). Asparagine 322 is a glycosylation site (N-linked (GlcNAc...) asparagine). Residues 428–448 (QSIYFSVHVLAISLFLLGRVL) form a helical membrane-spanning segment. Residues 449 to 473 (ALKSPRRPRNTKEEKAEAKQENRLQ) lie on the Cytoplasmic side of the membrane.

Belongs to the membrane-bound acyltransferase family.

The protein resides in the endoplasmic reticulum membrane. The catalysed reaction is a 1-acyl-sn-glycero-3-phospho-(1D-myo-inositol) + (5Z,8Z,11Z,14Z)-eicosatetraenoyl-CoA = a 1-acyl-2-(5Z,8Z,11Z,14Z-eicosatetraenoyl)-sn-glycero-3-phospho-(1D-myo-inositol) + CoA. The enzyme catalyses (5Z,8Z,11Z,14Z)-eicosatetraenoyl-CoA + 1-hexadecanoyl-sn-glycero-3-phosphocholine = 1-hexadecanoyl-2-(5Z,8Z,11Z,14Z-eicosatetraenoyl)-sn-glycero-3-phosphocholine + CoA. It carries out the reaction a 1-acyl-sn-glycero-3-phospho-(1D-myo-inositol) + an acyl-CoA = a 1,2-diacyl-sn-glycero-3-phospho-(1D-myo-inositol) + CoA. It catalyses the reaction 1-octadecanoyl-sn-glycero-3-phospho-(1D-myo-inositol) + (5Z,8Z,11Z,14Z)-eicosatetraenoyl-CoA = 1-octadecanoyl-2-(5Z,8Z,11Z,14Z-eicosatetraenoyl)-sn-glycero-3-phospho-(1D-myo-inositol) + CoA. The protein operates within lipid metabolism; phospholipid metabolism. Functionally, acyltransferase which catalyzes the transfer of an acyl group from an acyl-CoA to a lysophosphatidylinositol (1-acylglycerophosphatidylinositol or LPI) leading to the production of a phosphatidylinositol (1,2-diacyl-sn-glycero-3-phosphoinositol or PI) and participates in the reacylation step of the phospholipid remodeling pathway also known as the Lands cycle. Prefers arachidonoyl-CoA as the acyl donor, thus contributing to the regulation of free levels arachidonic acid in cell. In Xenopus laevis (African clawed frog), this protein is Membrane-bound acylglycerophosphatidylinositol O-acyltransferase mboat7 (mboat7).